Consider the following 117-residue polypeptide: Large ribosomal subunit protein uL18 (117 aa).

Residues 1 to 17 (MNLSRNKARKVKQKRLR) show a composition bias toward basic residues. The interval 1–23 (MNLSRNKARKVKQKRLRAKSELS) is disordered.

The protein belongs to the universal ribosomal protein uL18 family. In terms of assembly, part of the 50S ribosomal subunit; part of the 5S rRNA/L5/L18/L25 subcomplex. Contacts the 5S and 23S rRNAs.

Functionally, this is one of the proteins that bind and probably mediate the attachment of the 5S RNA into the large ribosomal subunit, where it forms part of the central protuberance. In Mycoplasmopsis synoviae (strain 53) (Mycoplasma synoviae), this protein is Large ribosomal subunit protein uL18.